The sequence spans 419 residues: Pregnancy-specific beta-1-glycoprotein 4 (419 aa).

The N-terminal stretch at 1–34 (MGPLSAPPCTQRITWKGVLLTASLLNFWNPPTTA) is a signal peptide. The Ig-like V-type domain maps to 35–144 (QVTIEAQPPK…TGHFTFTLHL (110 aa)). 6 N-linked (GlcNAc...) asparagine glycosylation sites follow: Asn-104, Asn-111, Asn-199, Asn-268, Asn-299, and Asn-303. 3 Ig-like C2-type domains span residues 147–234 (PKPS…VTLN), 237–327 (PKLS…VTLN), and 332–410 (PDLP…KSIT). Cystine bridges form between Cys-169–Cys-217, Cys-262–Cys-310, and Cys-354–Cys-394.

It belongs to the immunoglobulin superfamily. CEA family.

Its subcellular location is the secreted. This chain is Pregnancy-specific beta-1-glycoprotein 4 (PSG4), found in Homo sapiens (Human).